The primary structure comprises 344 residues: Fructose-1,6-bisphosphatase class 1 (344 aa).

Mg(2+) contacts are provided by Glu91, Asp110, Leu112, and Asp113. Substrate-binding positions include Asp113–Ser116 and Asn200. Residue Glu272 participates in Mg(2+) binding.

Belongs to the FBPase class 1 family. Homotetramer. Mg(2+) is required as a cofactor.

It is found in the cytoplasm. It catalyses the reaction beta-D-fructose 1,6-bisphosphate + H2O = beta-D-fructose 6-phosphate + phosphate. It participates in carbohydrate biosynthesis; Calvin cycle. The chain is Fructose-1,6-bisphosphatase class 1 from Rhodopseudomonas palustris (strain BisB18).